A 484-amino-acid polypeptide reads, in one-letter code: Diaminopimelate decarboxylase 1, chloroplastic (484 aa).

A compositionally biased stretch (polar residues) spans 1 to 28 (MAAATQFLSQPSSLNPHQLKNQTSQRSR). The segment at 1–30 (MAAATQFLSQPSSLNPHQLKNQTSQRSRSI) is disordered. A chloroplast-targeting transit peptide spans 1–49 (MAAATQFLSQPSSLNPHQLKNQTSQRSRSIPVLSLKSTLKPLKRLSVKA). Position 50 is an N-acetylalanine (Ala50). Lys125 is modified (N6-(pyridoxal phosphate)lysine). Residues Gly304 and 340–343 (EPGR) each bind pyridoxal 5'-phosphate. The substrate site is built by Arg343, Arg379, and Tyr383. Residue Cys411 is the Proton donor of the active site. Glu412 and Tyr440 together coordinate substrate. Residue Tyr440 coordinates pyridoxal 5'-phosphate.

It belongs to the Orn/Lys/Arg decarboxylase class-II family. LysA subfamily. Homodimer. Requires pyridoxal 5'-phosphate as cofactor.

Its subcellular location is the plastid. The protein localises to the chloroplast. The catalysed reaction is meso-2,6-diaminopimelate + H(+) = L-lysine + CO2. It participates in amino-acid biosynthesis; L-lysine biosynthesis via DAP pathway; L-lysine from DL-2,6-diaminopimelate: step 1/1. Its function is as follows. Specifically catalyzes the decarboxylation of meso-diaminopimelate (meso-DAP) to L-lysine. The chain is Diaminopimelate decarboxylase 1, chloroplastic (LYSA1) from Arabidopsis thaliana (Mouse-ear cress).